A 241-amino-acid polypeptide reads, in one-letter code: MSKIVLLIVVIVGVLGSLAVALPQRPYTQPLIYYPPPPTPPRIYRARRQVLGGSLTSNPSGGADARLDLSKAVGTPDHHVIGQVFAAGNTQTKPVSTPVTSGATLGYNNHGHGLELTKTHTPGVRDSFQQTATANLFNNGVHNLDAKAFASQNQLANGFKFDRNGAALDYSHIKGHGATLTHANIPGLGKQLELGGRANLWQSQDRNTRLDLGSTASKWTSGPFKGQTDLGANLGLSHYFG.

Positions 1–21 are cleaved as a signal peptide; that stretch reads MSKIVLLIVVIVGVLGSLAVA. Residues 22–23 constitute a propeptide that is removed on maturation; that stretch reads LP. Q24 is subject to Pyrrolidone carboxylic acid. O-linked (GalNAc...) threonine glycosylation is present at T39. S127 carries the phosphoserine modification.

This sequence belongs to the attacin/sarcotoxin-2 family. Hemolymph (at protein level).

It is found in the secreted. Has antimicrobial activity in synergy with other peptides. Strongest activity observed against E.cloacae. The protein is Attacin-C of Drosophila melanogaster (Fruit fly).